Reading from the N-terminus, the 970-residue chain is Sodium/calcium exchanger 1 (970 aa).

The N-terminal stretch at 1-32 is a signal peptide; the sequence is MLRLRLSPTFSVGFHLLAFVPLLFSHVDLISA. At 33-71 the chain is on the extracellular side; it reads DTEMEGEGNETGECTGSYYCKKGVILPIWEPQDPSFGDK. N41 is a glycosylation site (N-linked (GlcNAc...) asparagine). A helical transmembrane segment spans residues 72–92; sequence IARATVYFVAMVYMFLGVSII. Topologically, residues 93–133 are cytoplasmic; the sequence is ADRFMSSIEVITSQEKEITIKKPNGETTKTTVRIWNETVSN. A helical transmembrane segment spans residues 134-154; sequence LTLMALGSSAPEILLSVIEVC. The Alpha-1 repeat unit spans residues 138 to 178; the sequence is ALGSSAPEILLSVIEVCGHNFTAGDLGPSTIVGSAAFNMFI. The Extracellular portion of the chain corresponds to 155–167; that stretch reads GHNFTAGDLGPST. N157 is a glycosylation site (N-linked (GlcNAc...) asparagine). The helical transmembrane segment at 168–188 threads the bilayer; that stretch reads IVGSAAFNMFIIIALCVYVVP. Over 189-201 the chain is Cytoplasmic; the sequence is DGETRKIKHLRVF. Residues 202-222 form a helical membrane-spanning segment; the sequence is FVTAAWSIFAYTWLYIILSVI. Over 223-228 the chain is Extracellular; the sequence is SPGVVE. Residues 229-249 traverse the membrane as a helical segment; it reads VWEGLLTFFFFPICVVFAWVA. Topologically, residues 250–797 are cytoplasmic; that stretch reads DRRLLFYKYV…FVPPTEYWNG (548 aa). The tract at residues 251 to 270 is putative calmodulin-binding region; sequence RRLLFYKYVYKRYRAGKQRG. S282 and S389 each carry phosphoserine. Calx-beta domains follow at residues 393-493 and 524-624; these read VNTE…VHLS and ATVT…LEIG. The Ca(2+) site is built by E417, D453, D478, D479, I481, E483, E486, D530, D531, D532, E548, D584, D610, E611, E612, and E715. A helical transmembrane segment spans residues 798–818; the sequence is WACFIVSILMIGILTAFIGDL. Residues 819–821 are Extracellular-facing; sequence ASH. A helical membrane pass occupies residues 822–842; it reads FGCTIGLKDSVTAVVFVALGT. The stretch at 839 to 875 is one Alpha-2 repeat; sequence ALGTSVPDTFASKVAATQDQYADASIGNVTGSNAVNV. The Cytoplasmic portion of the chain corresponds to 843-871; sequence SVPDTFASKVAATQDQYADASIGNVTGSN. A helical transmembrane segment spans residues 872-892; the sequence is AVNVFLGIGVAWSIAAIYHAA. Topologically, residues 893-903 are extracellular; it reads NGEQFKVSPGT. A helical transmembrane segment spans residues 904–924; it reads LAFSVTLFTIFAFINVGVLLY. Topologically, residues 925–941 are cytoplasmic; it reads RRRPEIGGELGGPRTAK. A helical membrane pass occupies residues 942-962; it reads LLTSCLFVLLWLLYIFFSSLE. The Extracellular portion of the chain corresponds to 963-970; sequence AYCHIKGF.

This sequence belongs to the Ca(2+):cation antiporter (CaCA) (TC 2.A.19) family. SLC8 subfamily. Detected in heart (at protein level). Detected in heart.

It is found in the cell membrane. It carries out the reaction Ca(2+)(in) + 3 Na(+)(out) = Ca(2+)(out) + 3 Na(+)(in). Its activity is regulated as follows. Activated by micromolar levels of Ca(2+). Mediates the exchange of one Ca(2+) ion against three to four Na(+) ions across the cell membrane, and thereby contributes to the regulation of cytoplasmic Ca(2+) levels and Ca(2+)-dependent cellular processes. Contributes to Ca(2+) transport during excitation-contraction coupling in muscle. In a first phase, voltage-gated channels mediate the rapid increase of cytoplasmic Ca(2+) levels due to release of Ca(2+) stores from the endoplasmic reticulum. SLC8A1 mediates the export of Ca(2+) from the cell during the next phase, so that cytoplasmic Ca(2+) levels rapidly return to baseline. Required for normal embryonic heart development and the onset of heart contractions. The polypeptide is Sodium/calcium exchanger 1 (SLC8A1) (Felis catus (Cat)).